Consider the following 527-residue polypeptide: Peptide chain release factor 3 (527 aa).

Residues 9 to 277 (AKRRTFAIIS…AVVDWAPRPL (269 aa)) form the tr-type G domain. GTP contacts are provided by residues 18-25 (SHPDAGKT), 86-90 (DTPGH), and 140-143 (NKLD).

The protein belongs to the TRAFAC class translation factor GTPase superfamily. Classic translation factor GTPase family. PrfC subfamily.

It localises to the cytoplasm. Its function is as follows. Increases the formation of ribosomal termination complexes and stimulates activities of RF-1 and RF-2. It binds guanine nucleotides and has strong preference for UGA stop codons. It may interact directly with the ribosome. The stimulation of RF-1 and RF-2 is significantly reduced by GTP and GDP, but not by GMP. In Pseudomonas putida (strain ATCC 47054 / DSM 6125 / CFBP 8728 / NCIMB 11950 / KT2440), this protein is Peptide chain release factor 3.